Consider the following 753-residue polypeptide: Synaptotagmin-like protein 5 (753 aa).

One can recognise a RabBD domain in the interval Phe7–Glu123. The FYVE-type zinc finger occupies Cys64–Cys106. 3 disordered regions span residues Arg145 to Leu188, Ser221 to Asn283, and Thr298 to Leu359. Ser147 is subject to Phosphoserine. The span at Ser224 to Leu238 shows a compositional bias: low complexity. 2 stretches are compositionally biased toward polar residues: residues Thr260–Ser275 and Thr305–Thr316. C2 domains follow at residues Val429 to Phe550 and Pro590 to Met717.

In terms of assembly, binds RAB27A that has been activated by GTP-binding.

The protein localises to the membrane. In terms of biological role, may act as Rab effector protein and play a role in vesicle trafficking. Binds phospholipids. This Rattus norvegicus (Rat) protein is Synaptotagmin-like protein 5 (Sytl5).